Here is a 75-residue protein sequence, read N- to C-terminus: Tautomerase PptA (75 aa).

Pro-2 functions as the Proton acceptor; via imino nitrogen in the catalytic mechanism.

The protein belongs to the 4-oxalocrotonate tautomerase family. PptA subfamily. As to quaternary structure, homodimer.

It is found in the cytoplasm. The protein is Tautomerase PptA of Shigella sonnei (strain Ss046).